A 203-amino-acid polypeptide reads, in one-letter code: Acid phosphatase (203 aa).

His13 acts as the Tele-phosphohistidine intermediate in catalysis. The active-site Proton donor/acceptor is Glu85.

The protein belongs to the phosphoglycerate mutase family. As to quaternary structure, homodimer.

It catalyses the reaction a phosphate monoester + H2O = an alcohol + phosphate. It carries out the reaction beta-D-fructose 1,6-bisphosphate + H2O = beta-D-fructose 6-phosphate + phosphate. The protein operates within carbohydrate biosynthesis; gluconeogenesis. Its activity is regulated as follows. In contrast to classical FBPases, is resistant to inhibition by lithium. Its function is as follows. Phosphatase with a broad specificity. Can dephosphorylate a variety of substrates including phosphorylated sugars like fructose-6-phosphate (F6P). Is able to function in vivo as a fructose-1,6-bisphosphatase (FBPase) and to maintain gluconeogenesis when the classical FBPase GlpX is absent. Shows negligible phosphoglycerate mutase activity. Has no phosphatase activity against 3-phosphoglycerate, 2,3-bisphosphoglycerate, or hydrophobic substrates such as alpha-napthyl phosphate. This Mycobacterium tuberculosis (strain ATCC 25618 / H37Rv) protein is Acid phosphatase.